Reading from the N-terminus, the 165-residue chain is Small ribosomal subunit protein uS5 (165 aa).

Residues glutamine 10 to valine 73 enclose the S5 DRBM domain.

The protein belongs to the universal ribosomal protein uS5 family. In terms of assembly, part of the 30S ribosomal subunit. Contacts proteins S4 and S8.

In terms of biological role, with S4 and S12 plays an important role in translational accuracy. Functionally, located at the back of the 30S subunit body where it stabilizes the conformation of the head with respect to the body. The protein is Small ribosomal subunit protein uS5 of Borreliella burgdorferi (strain ATCC 35210 / DSM 4680 / CIP 102532 / B31) (Borrelia burgdorferi).